The primary structure comprises 326 residues: MDIKPKKYKPTKEEYIKSFKDMLLLRRFEEKCGQLYGMGEIGGFCHLYIGQEAVISAVDTVKQKGDSTITSYRDHAHIILAGTEPKYVLAELMGRATGCSKGKGGSMHLFDIPNKFYGGHGIVGAQVPIGTGLAFAEKYNGTNNICFTFLGDGAVNQGQVYEAFNMAALWGLPVVYIIENNEYSMGTSVARSTFMRDLYKKGESFGIKGFQLDGMDFEEMYNGAKQAAEYVRENSFPLILEVKTYRYRGHSMSDPAKYRSKEEVEQYKERDPLVIIRKTILDNKYATEADLKEIEQSVKEIVKEAVKFSENSPLPDEGELYTEVYC.

Heterodimer of an alpha and a beta chain. Requires thiamine diphosphate as cofactor.

The enzyme catalyses N(6)-[(R)-lipoyl]-L-lysyl-[protein] + pyruvate + H(+) = N(6)-[(R)-S(8)-acetyldihydrolipoyl]-L-lysyl-[protein] + CO2. Its function is as follows. The pyruvate dehydrogenase complex catalyzes the overall conversion of pyruvate to acetyl-CoA and CO(2). It contains multiple copies of three enzymatic components: pyruvate dehydrogenase (E1), dihydrolipoamide acetyltransferase (E2) and lipoamide dehydrogenase (E3). In Rickettsia felis (strain ATCC VR-1525 / URRWXCal2) (Rickettsia azadi), this protein is Pyruvate dehydrogenase E1 component subunit alpha (pdhA).